The sequence spans 183 residues: uncharacterized protein (183 aa).

The next 4 membrane-spanning stretches (helical) occupy residues 37–59 (LFGY…PRQF), 79–98 (AILL…VTSV), 110–132 (WRTF…VLVL), and 142–161 (AFYA…TYVF).

Its subcellular location is the cell membrane. This is an uncharacterized protein from Archaeoglobus fulgidus (strain ATCC 49558 / DSM 4304 / JCM 9628 / NBRC 100126 / VC-16).